We begin with the raw amino-acid sequence, 88 residues long: DNA-directed RNA polymerase subunit omega (88 aa).

The protein belongs to the RNA polymerase subunit omega family. As to quaternary structure, the RNAP catalytic core consists of 2 alpha, 1 beta, 1 beta' and 1 omega subunit. When a sigma factor is associated with the core the holoenzyme is formed, which can initiate transcription.

It carries out the reaction RNA(n) + a ribonucleoside 5'-triphosphate = RNA(n+1) + diphosphate. In terms of biological role, promotes RNA polymerase assembly. Latches the N- and C-terminal regions of the beta' subunit thereby facilitating its interaction with the beta and alpha subunits. The chain is DNA-directed RNA polymerase subunit omega from Clostridioides difficile (strain 630) (Peptoclostridium difficile).